The sequence spans 462 residues: F-box/LRR-repeat protein At5g38396 (462 aa).

In terms of domain architecture, F-box spans 1–47 (MDLLRNIPDELICHILSFLTTKEAALTSVLSKRWRNLLAFVSNLHID). 5 LRR repeats span residues 118–146 (SIDL…KLHR), 148–175 (CIGQ…ELDY), 197–222 (VDAF…TMSS), 302–333 (CLDL…SIKS), and 334–359 (AENR…VLEG).

The protein is F-box/LRR-repeat protein At5g38396 of Arabidopsis thaliana (Mouse-ear cress).